The sequence spans 170 residues: Urease accessory protein UreE (170 aa).

The segment at 144-170 is disordered; sequence GGHSHDDHDHHHGHHEHDHEHHHHHHD. Positions 146-162 are enriched in basic and acidic residues; it reads HSHDDHDHHHGHHEHDH.

It belongs to the UreE family.

It localises to the cytoplasm. In terms of biological role, involved in urease metallocenter assembly. Binds nickel. Probably functions as a nickel donor during metallocenter assembly. The chain is Urease accessory protein UreE from Brucella anthropi (strain ATCC 49188 / DSM 6882 / CCUG 24695 / JCM 21032 / LMG 3331 / NBRC 15819 / NCTC 12168 / Alc 37) (Ochrobactrum anthropi).